The sequence spans 139 residues: Fluoroacetyl-CoA thioesterase (139 aa).

Substrate contacts are provided by residues 40-50 and glycine 69; that span reads FATGFMVGLME. Active-site residues include threonine 42 and glutamate 50. Residues glycine 69 and 76 to 77 each bind CoA; that span reads HT. Histidine 76 is an active-site residue. Arginine 120 serves as a coordination point for substrate.

As to quaternary structure, homodimer.

It catalyses the reaction fluoroacetyl-CoA + H2O = fluoroacetate + CoA + H(+). Its function is as follows. Hydrolyzes fluoroacetyl-CoA before it can react with citrate synthase, and thus confers fluoroacetate resistance. Cannot use acetyl-CoA as substrate. The sequence is that of Fluoroacetyl-CoA thioesterase (flK) from Streptantibioticus cattleyicolor (Streptomyces cattleya).